The chain runs to 4963 residues: Kettin homolog (4963 aa).

3 Ig-like domains span residues 18 to 105 (PTFI…TCIL), 133 to 220 (PSAP…EAIS), and 303 to 392 (PIIR…ARIE). 5 disordered regions span residues 396-420 (LSVPDERRKENQLREQQERDRQQQQ), 466-501 (RRQLEHEKRLRQQQQQQLFEREKSEKEERARLEEER), 557-578 (IRPHQQQQQHYQQQQQSPRQEV), 598-622 (QLYQHQHQQHQQQQQQPQEQQQQRF), and 652-696 (TNGG…GHEH). Composition is skewed to basic and acidic residues over residues 399 to 417 (PDERRKENQLREQQERDRQ), 466 to 475 (RRQLEHEKRL), and 484 to 501 (FEREKSEKEERARLEEER). A coiled-coil region spans residues 401-517 (ERRKENQLRE…KHLRQQQQTQ (117 aa)). Over residues 557–576 (IRPHQQQQQHYQQQQQSPRQ) the composition is skewed to low complexity. The span at 658–685 (AANGSAKTANGSANGSANGSAVHAANGG) shows a compositional bias: low complexity. Ig-like domains follow at residues 706–796 (PQFL…FSLN), 806–893 (PEFT…GRVV), 937–1027 (PKFE…ANIA), 1065–1155 (PNFH…ATII), 1199–1281 (FHCE…AELT), 1462–1554 (PKFL…ITVT), 1594–1687 (PPTF…ATIR), 1728–1819 (PAFV…VDIN), 1992–2085 (PPVF…IFLE), 2126–2217 (PTFT…CTVK), 2258–2350 (PKFV…ANFT), 2391–2481 (PQFI…AQLT), 2522–2613 (PKFV…GQLS), 2654–2745 (PSFV…ANVG), 2787–2878 (PQWV…ATVT), 2919–3010 (PNFL…ASIR), 3051–3141 (PAIT…ATLK), 3182–3273 (PRFI…ATIE), 3314–3407 (PAIV…FEVS), and 3448–3539 (PVFI…TKLT). C827 and C877 are joined by a disulfide. A disulfide bond links C1201 and C1265. C1618 and C1671 are oxidised to a cystine. Intrachain disulfides connect C2016–C2069 and C2148–C2201. A compositionally biased stretch (basic and acidic residues) spans 3567 to 3583 (EAPRPAREDAPDADHGP). The segment at 3567 to 3590 (EAPRPAREDAPDADHGPPKFTSAL) is disordered. 5 consecutive Ig-like domains span residues 3584–3677 (PKFT…LKVV), 3720–3811 (PSFS…GKIA), 3821–3913 (PQVV…TKIT), 3962–4052 (PEFR…AKLA), and 4098–4185 (PQFT…ATLD). Intrachain disulfides connect C3606–C3659 and C3742–C3795. The segment at 4193–4963 (RQTKLRPANF…TSQAKLTLSR (771 aa)) is required for F-actin binding. The segment covering 4319 to 4329 (DQQEVGWERPD) has biased composition (basic and acidic residues). The segment at 4319–4357 (DQQEVGWERPDWAGQDGTSKLPGADEGRFKKLPTPAPEL) is disordered. Ig-like domains lie at 4546–4634 (PTIS…ANLT), 4645–4733 (PDFS…ARLN), 4752–4842 (PRFT…LVLT), and 4872–4960 (PHFI…AKLT).

Interacts (via Ig-like domains) with F-actin. Expressed in the pharyngeal, body wall, and anal depressor muscles. Expression in these muscles is higher in hermaphrodites than in males. Expressed in the vulva and the myoepithelial sheath of the proximal ovary. Expressed in the proximal gonad of males. Not expressed in the dense bodies of the obliquely striated body wall muscle.

It is found in the cytoplasm. The protein resides in the myofibril. Its subcellular location is the sarcomere. It localises to the cytoskeleton. Its function is as follows. Positively regulates actin filament organization and provides mechanical stability to the myofibrils during body wall muscle contraction. Required for the organization of sarcomeric actin filaments and myosin protein myo-3 in striated body wall muscle cells. Not required for assembly of dense bodies, which are a type of integrin-based adhesion structure that link the plasma membrane to thin filaments of myofibrils, in body wall muscle. Not required for the atn-1 protein to localize to the dense bodies. This is Kettin homolog from Caenorhabditis elegans.